Reading from the N-terminus, the 278-residue chain is Indole-3-glycerol phosphate synthase (278 aa).

The protein belongs to the TrpC family.

The enzyme catalyses 1-(2-carboxyphenylamino)-1-deoxy-D-ribulose 5-phosphate + H(+) = (1S,2R)-1-C-(indol-3-yl)glycerol 3-phosphate + CO2 + H2O. The protein operates within amino-acid biosynthesis; L-tryptophan biosynthesis; L-tryptophan from chorismate: step 4/5. In Pseudomonas fluorescens (strain Pf0-1), this protein is Indole-3-glycerol phosphate synthase.